The following is a 203-amino-acid chain: A-type ATP synthase subunit E (203 aa).

It belongs to the V-ATPase E subunit family. As to quaternary structure, has multiple subunits with at least A(3), B(3), C, D, E, F, H, I and proteolipid K(x).

The protein resides in the cell membrane. Its function is as follows. Component of the A-type ATP synthase that produces ATP from ADP in the presence of a proton gradient across the membrane. This is A-type ATP synthase subunit E from Methanococcus maripaludis (strain C7 / ATCC BAA-1331).